A 124-amino-acid polypeptide reads, in one-letter code: Ragulator complex protein LAMTOR3 (124 aa).

The required for interaction with LAMTOR2 stretch occupies residues 57-70; that stretch reads TDQGSKLGLSKNKS.

Belongs to the LAMTOR3 family. In terms of assembly, part of the Ragulator complex composed of LAMTOR1, LAMTOR2, LAMTOR3, LAMTOR4 and LAMTOR5. LAMTOR4 and LAMTOR5 form a heterodimer that interacts, through LAMTOR1, with a LAMTOR2, LAMTOR3 heterodimer. Interacts with LAMTOR1 and LAMTOR2; the interaction is direct. The Ragulator complex interacts with both the mTORC1 complex and heterodimers constituted of the Rag GTPases RagA/RRAGA, RagB/RRAGB, RagC/RRAGC and RagD/RRAGD; regulated by amino acid availability. The Ragulator complex interacts with SLC38A9; the probable amino acid sensor. Component of the lysosomal folliculin complex (LFC), composed of FLCN, FNIP1 (or FNIP2), RagA/RRAGA or RagB/RRAGB GDP-bound, RagC/RRAGC or RagD/RRAGD GTP-bound, and Ragulator. Interacts with MAP2K1/MEK1 and MAPK2. Interacts with MORG1.

It is found in the late endosome membrane. Functionally, as part of the Ragulator complex it is involved in amino acid sensing and activation of mTORC1, a signaling complex promoting cell growth in response to growth factors, energy levels, and amino acids. Activated by amino acids through a mechanism involving the lysosomal V-ATPase, the Ragulator plays a dual role for the small GTPases Rag (RagA/RRAGA, RagB/RRAGB, RagC/RRAGC and/or RagD/RRAGD): it (1) acts as a guanine nucleotide exchange factor (GEF), activating the small GTPases Rag and (2) mediates recruitment of Rag GTPases to the lysosome membrane. Activated Ragulator and Rag GTPases function as a scaffold recruiting mTORC1 to lysosomes where it is in turn activated. Adapter protein that enhances the efficiency of the MAP kinase cascade facilitating the activation of MAPK2. The polypeptide is Ragulator complex protein LAMTOR3 (Homo sapiens (Human)).